Here is a 376-residue protein sequence, read N- to C-terminus: Cyclic GMP-AMP synthase-like receptor 1 (376 aa).

Positions 77 and 79 each coordinate Mg(2+).

The protein belongs to the mab-21 family. Mg(2+) serves as cofactor. Mn(2+) is required as a cofactor.

It carries out the reaction UTP + ATP = 3',3'-cUAMP + 2 diphosphate. Functionally, nucleotidyltransferase that catalyzes the formation of cyclic UMP-AMP (3',3'-cUAMP) from ATP and UTP and plays a key role in innate immunity. Acts as a key sensor of double-stranded RNA (dsRNA), the presence of dsRNA in the cytoplasm being a danger signal that triggers the immune responses. Directly binds dsRNA, activating the nucleotidyltransferase activity, leading to synthesis of 3',3'-cUAMP, a second messenger that binds to and activates Sting, thereby triggering the immune response via activation of the NF-kappa-B transcription factor. The sequence is that of Cyclic GMP-AMP synthase-like receptor 1 from Stylophora pistillata (Smooth cauliflower coral).